Here is a 154-residue protein sequence, read N- to C-terminus: Ribonuclease H (154 aa).

The region spanning 1–141 is the RNase H type-1 domain; the sequence is MKRIEAYTDG…ADELARAGME (141 aa). Residues aspartate 9, glutamate 47, aspartate 69, and aspartate 133 each coordinate Mg(2+).

It belongs to the RNase H family. As to quaternary structure, monomer. The cofactor is Mg(2+).

The protein resides in the cytoplasm. The enzyme catalyses Endonucleolytic cleavage to 5'-phosphomonoester.. Its function is as follows. Endonuclease that specifically degrades the RNA of RNA-DNA hybrids. This is Ribonuclease H from Brucella abortus (strain 2308).